We begin with the raw amino-acid sequence, 426 residues long: Histidinol dehydrogenase (426 aa).

The NAD(+) site is built by Y130, Q187, and N210. 3 residues coordinate substrate: S233, Q255, and H258. Zn(2+) is bound by residues Q255 and H258. Catalysis depends on proton acceptor residues E323 and H324. Positions 324, 357, 411, and 416 each coordinate substrate. D357 serves as a coordination point for Zn(2+). H416 serves as a coordination point for Zn(2+).

The protein belongs to the histidinol dehydrogenase family. Zn(2+) is required as a cofactor.

The catalysed reaction is L-histidinol + 2 NAD(+) + H2O = L-histidine + 2 NADH + 3 H(+). The protein operates within amino-acid biosynthesis; L-histidine biosynthesis; L-histidine from 5-phospho-alpha-D-ribose 1-diphosphate: step 9/9. Its function is as follows. Catalyzes the sequential NAD-dependent oxidations of L-histidinol to L-histidinaldehyde and then to L-histidine. This is Histidinol dehydrogenase (hisD) from Aquifex aeolicus (strain VF5).